The sequence spans 215 residues: Cytochrome b6 (215 aa).

Residues 32–52 (IFYCLGGITLTCFLVQVATGF) traverse the membrane as a helical segment. A heme c-binding site is contributed by cysteine 35. The heme b site is built by histidine 86 and histidine 100. 3 consecutive transmembrane segments (helical) span residues 90-110 (ASMM…TGGF), 116-136 (LTWV…VTGY), and 186-206 (LHTF…FLMI). The heme b site is built by histidine 187 and histidine 202.

This sequence belongs to the cytochrome b family. PetB subfamily. As to quaternary structure, the 4 large subunits of the cytochrome b6-f complex are cytochrome b6, subunit IV (17 kDa polypeptide, PetD), cytochrome f and the Rieske protein, while the 4 small subunits are PetG, PetL, PetM and PetN. The complex functions as a dimer. Requires heme b as cofactor. Heme c is required as a cofactor.

The protein resides in the plastid. It is found in the chloroplast thylakoid membrane. In terms of biological role, component of the cytochrome b6-f complex, which mediates electron transfer between photosystem II (PSII) and photosystem I (PSI), cyclic electron flow around PSI, and state transitions. The polypeptide is Cytochrome b6 (Eucalyptus globulus subsp. globulus (Tasmanian blue gum)).